Reading from the N-terminus, the 109-residue chain is Elongin-C (109 aa).

The protein belongs to the SKP1 family.

The protein localises to the nucleus. Functionally, SIII, also known as elongin, is a general transcription elongation factor that increases the RNA polymerase II transcription elongation past template-encoded arresting sites. Subunit A is transcriptionally active and its transcription activity is strongly enhanced by binding to the dimeric complex of the SIII regulatory subunits B and C (elongin BC complex). Its function is as follows. The elongin BC complex seems to be involved as an adapter protein in the proteasomal degradation of target proteins via different E3 ubiquitin ligase complexes. The polypeptide is Elongin-C (tceb1) (Dictyostelium discoideum (Social amoeba)).